The following is a 304-amino-acid chain: Sulfate adenylyltransferase subunit 2 (304 aa).

The protein belongs to the PAPS reductase family. CysD subfamily. Heterodimer composed of CysD, the smaller subunit, and CysN.

It catalyses the reaction sulfate + ATP + H(+) = adenosine 5'-phosphosulfate + diphosphate. The protein operates within sulfur metabolism; hydrogen sulfide biosynthesis; sulfite from sulfate: step 1/3. In terms of biological role, with CysN forms the ATP sulfurylase (ATPS) that catalyzes the adenylation of sulfate producing adenosine 5'-phosphosulfate (APS) and diphosphate, the first enzymatic step in sulfur assimilation pathway. APS synthesis involves the formation of a high-energy phosphoric-sulfuric acid anhydride bond driven by GTP hydrolysis by CysN coupled to ATP hydrolysis by CysD. The sequence is that of Sulfate adenylyltransferase subunit 2 from Halorhodospira halophila (strain DSM 244 / SL1) (Ectothiorhodospira halophila (strain DSM 244 / SL1)).